We begin with the raw amino-acid sequence, 740 residues long: Ion-translocating oxidoreductase complex subunit C (740 aa).

2 4Fe-4S ferredoxin-type domains span residues 369–397 (GEPQEEQSCIRCSACADACPADLLPQQLY) and 407–436 (KATTHNIADCIECGACAWVCPSNIPLVQYF). Positions 377, 380, 383, 387, 416, 419, 422, and 426 each coordinate [4Fe-4S] cluster. A disordered region spans residues 602-684 (KLEQQQANAE…EPEEQVDPRK (83 aa)). 2 stretches are compositionally biased toward low complexity: residues 605 to 615 (QQQANAEPEQQ) and 637 to 647 (QQQANAEPEQQ).

The protein belongs to the 4Fe4S bacterial-type ferredoxin family. RnfC subfamily. In terms of assembly, the complex is composed of six subunits: RsxA, RsxB, RsxC, RsxD, RsxE and RsxG. [4Fe-4S] cluster is required as a cofactor.

The protein localises to the cell inner membrane. In terms of biological role, part of a membrane-bound complex that couples electron transfer with translocation of ions across the membrane. Required to maintain the reduced state of SoxR. The chain is Ion-translocating oxidoreductase complex subunit C from Escherichia coli O7:K1 (strain IAI39 / ExPEC).